The primary structure comprises 124 residues: MTSSAAAAIKQALGAYGETLAARHLVGQGMVLLERNWRCEAGEIDLVLRDGDVLVVCEVKTRSSLRYGTPHEAVTDIKVARLRRLASRWVQDRGVAVRDIRIDLVGIVRPRRGSSVVDHVRGIG.

Belongs to the UPF0102 family.

In Nocardioides sp. (strain ATCC BAA-499 / JS614), this protein is UPF0102 protein Noca_3248.